The chain runs to 141 residues: Nucleoside diphosphate kinase (141 aa).

ATP contacts are provided by K11, F59, R87, T93, R104, and N114. H117 functions as the Pros-phosphohistidine intermediate in the catalytic mechanism.

It belongs to the NDK family. Homotetramer. The cofactor is Mg(2+).

The protein localises to the cytoplasm. It carries out the reaction a 2'-deoxyribonucleoside 5'-diphosphate + ATP = a 2'-deoxyribonucleoside 5'-triphosphate + ADP. The enzyme catalyses a ribonucleoside 5'-diphosphate + ATP = a ribonucleoside 5'-triphosphate + ADP. Functionally, major role in the synthesis of nucleoside triphosphates other than ATP. The ATP gamma phosphate is transferred to the NDP beta phosphate via a ping-pong mechanism, using a phosphorylated active-site intermediate. In Actinobacillus succinogenes (strain ATCC 55618 / DSM 22257 / CCUG 43843 / 130Z), this protein is Nucleoside diphosphate kinase.